The sequence spans 367 residues: Pre-small/secreted glycoprotein (367 aa).

The first 33 residues, 1–33 (MGSGYQLLQLPRERFRKTSFLVWVIILFQRAIS), serve as a signal peptide directing secretion. N-linked (GlcNAc...) asparagine; by host glycosylation is present at asparagine 41. Intrachain disulfides connect cysteine 109–cysteine 136 and cysteine 122–cysteine 148. Residues asparagine 205, asparagine 229, asparagine 239, asparagine 258, and asparagine 269 are each glycosylated (N-linked (GlcNAc...) asparagine; by host).

This sequence belongs to the filoviruses glycoprotein family. Homodimer; disulfide-linked. The homodimers are linked by two disulfide bonds in a parallel orientation. In terms of assembly, monomer. In terms of processing, this precursor is processed into mature sGP and delta-peptide by host furin or furin-like proteases. The cleavage site corresponds to the furin optimal cleavage sequence [KR]-X-[KR]-R. Post-translationally, N-glycosylated. O-glycosylated.

It is found in the secreted. Seems to possess an anti-inflammatory activity as it can reverse the barrier-decreasing effects of TNF alpha. Might therefore contribute to the lack of inflammatory reaction seen during infection in spite the of extensive necrosis and massive virus production. Does not seem to be involved in activation of primary macrophages. Does not seem to interact specifically with neutrophils. Its function is as follows. Viroporin that permeabilizes mammalian cell plasma membranes. It acts by altering permeation of ionic compounds and small molecules. This activity may lead to viral enterotoxic activity. In Epomops franqueti (Franquet's epauletted fruit bat), this protein is Pre-small/secreted glycoprotein (GP).